The primary structure comprises 178 residues: Caveolin-1 (178 aa).

At S2 the chain carries N-acetylserine. Phosphoserine is present on S2. Positions 2–94 are required for homooligomerization; that stretch reads SGGKYVDSEG…WKASFTTFTV (93 aa). Residues 2–104 lie on the Cytoplasmic side of the membrane; sequence SGGKYVDSEG…TKYWFYRLLS (103 aa). K5 carries the post-translational modification N6-acetyllysine; alternate. A Glycyl lysine isopeptide (Lys-Gly) (interchain with G-Cter in ubiquitin); alternate cross-link involves residue K5. At Y6 the chain carries Phosphotyrosine. Position 9 is a phosphoserine (S9). Position 14 is a phosphotyrosine; by ABL1 (Y14). The residue at position 25 (Y25) is a Phosphotyrosine. Glycyl lysine isopeptide (Lys-Gly) (interchain with G-Cter in ubiquitin) cross-links involve residues K26 and K30. Residue S37 is modified to Phosphoserine. Glycyl lysine isopeptide (Lys-Gly) (interchain with G-Cter in ubiquitin) cross-links involve residues K39, K47, and K57. The segment at 82–94 is interaction with CAVIN3; sequence DGIWKASFTTFTV. Positions 105–125 form an intramembrane region, helical; that stretch reads ALFGIPMALIWGIYFAILSFL. At 126-178 the chain is on the cytoplasmic side; sequence HIWAVVPCIKSFLIEIQCISRVYSIYVHTVCDPLFEAVGKIFSNVRINLQKEI. Positions 131-142 are interacts with SPRY1, SPRY2, SPRY3 and SPRY4; sequence VPCIKSFLIEIQ. 3 S-palmitoyl cysteine lipidation sites follow: C133, C143, and C156. The interval 149 to 160 is interacts with SPRY1, SPRY2, and SPRY4; the sequence is SIYVHTVCDPLF. The interacts with SPRY1, SPRY2, SPRY3 and SPRY4 stretch occupies residues 167–178; the sequence is FSNVRINLQKEI.

Belongs to the caveolin family. As to quaternary structure, homooligomer. Interacts with GLIPR2. Interacts with NOSTRIN. Interacts with SNAP25 and STX1A. Interacts (via the N-terminus) with DPP4; the interaction is direct. Interacts with CTNNB1, CDH1 and JUP. Interacts with PACSIN2; this interaction induces membrane tubulation. Interacts with SLC7A9. Interacts with BMX and BTK. Interacts with TGFBR1. Interacts with CAVIN3 (via leucine-zipper domain) in a cholesterol-sensitive manner. Interacts with CAVIN1. Interacts with EHD2 in a cholesterol-dependent manner. Forms a ternary complex with UBXN6 and VCP; mediates CAV1 targeting to lysosomes for degradation. Interacts with ABCG1; this interaction regulates ABCG1-mediated cholesterol efflux. Interacts with NEU3; this interaction enhances NEU3 sialidase activity within caveola. Interacts (via C-terminus) with SPRY1, SPRY2 (via C-terminus), SPRY3, and SPRY4. Interacts with IGFBP5; this interaction allows trafficking of IGFBP5 from the plasma membrane to the nucleus. Phosphorylated at Tyr-14 by ABL1 in response to oxidative stress. In terms of processing, ubiquitinated. Undergo monoubiquitination and multi- and/or polyubiquitination. Monoubiquitination of N-terminal lysines promotes integration in a ternary complex with UBXN6 and VCP which promotes oligomeric CAV1 targeting to lysosomes for degradation. Ubiquitinated by ZNRF1; leading to degradation and modulation of the TLR4-mediated immune response.

The protein resides in the golgi apparatus membrane. It is found in the cell membrane. Its subcellular location is the membrane. The protein localises to the caveola. It localises to the membrane raft. May act as a scaffolding protein within caveolar membranes. Forms a stable heterooligomeric complex with CAV2 that targets to lipid rafts and drives caveolae formation. Mediates the recruitment of CAVIN proteins (CAVIN1/2/3/4) to the caveolae. Interacts directly with G-protein alpha subunits and can functionally regulate their activity. Involved in the costimulatory signal essential for T-cell receptor (TCR)-mediated T-cell activation. Its binding to DPP4 induces T-cell proliferation and NF-kappa-B activation in a T-cell receptor/CD3-dependent manner. Recruits CTNNB1 to caveolar membranes and may regulate CTNNB1-mediated signaling through the Wnt pathway. Negatively regulates TGFB1-mediated activation of SMAD2/3 by mediating the internalization of TGFBR1 from membrane rafts leading to its subsequent degradation. Binds 20(S)-hydroxycholesterol (20(S)-OHC). In Pongo abelii (Sumatran orangutan), this protein is Caveolin-1 (CAV1).